Here is a 178-residue protein sequence, read N- to C-terminus: Gamma-crystallin S (178 aa).

Residue serine 2 is modified to N-acetylserine. The interval 2–5 is N-terminal arm; the sequence is SKTG. 2 Beta/gamma crystallin 'Greek key' domains span residues 6–44 and 45–87; these read TKIT…KVEG and GTWA…RAVH. Positions 88–93 are connecting peptide; that stretch reads LPSGGQ. Beta/gamma crystallin 'Greek key' domains follow at residues 94 to 134 and 135 to 177; these read YKIQ…KVLE and GVWI…RRIV.

This sequence belongs to the beta/gamma-crystallin family. In terms of assembly, monomer.

In terms of biological role, crystallins are the dominant structural components of the vertebrate eye lens. The chain is Gamma-crystallin S (CRYGS) from Homo sapiens (Human).